The primary structure comprises 941 residues: Pre-mRNA-processing factor 6 (941 aa).

A disordered region spans residues 1-79; sequence MNKKKKPFLG…DEDLNDTNYD (79 aa). Over residues 39–65 the composition is skewed to basic and acidic residues; it reads DANDPVDDRHAPPGKRTVGDQMKKNQA. A compositionally biased stretch (acidic residues) spans 66-78; it reads ADDDDEDLNDTNY. Phosphoserine is present on S143. 3 positions are modified to phosphothreonine: T180, T266, and T275. S279 bears the Phosphoserine mark. HAT repeat units lie at residues 384–416, 418–444, 445–476, 554–586, 588–620, 622–654, 689–721, 723–755, and 855–887; these read TDIR…LEEP, DARI…ARLE, TYEN…LEEA, NALE…FEKN, GTRE…SKWL, GDVP…LESE, GNIS…IEEQ, ELME…LEEK, and RKIT…FELQ.

As to quaternary structure, identified in the spliceosome B complex. Identified in the spliceosome C complex. Associates with the U5 snRNP particle. Component of the U4/U6-U5 tri-snRNP complex composed of the U4, U6 and U5 snRNAs and at least PRPF3, PRPF4, PRPF6, PRPF8, PRPF31, SNRNP200, TXNL4A, SNRNP40, DDX23, CD2BP2, PPIH, SNU13, EFTUD2, SART1 and USP39, LSm proteins LSm2-8 and Sm proteins. Interacts with ARAF1. Interacts with AR and NR3C1, but not ESR1, independently of the presence of hormones. Interacts with USH1G. Post-translationally, phosphorylated by PRP4K during spliceosome assembly.

The protein resides in the nucleus. It is found in the nucleoplasm. It localises to the nucleus speckle. Involved in pre-mRNA splicing as component of the U4/U6-U5 tri-snRNP complex, one of the building blocks of the spliceosome. Enhances dihydrotestosterone-induced transactivation activity of AR, as well as dexamethasone-induced transactivation activity of NR3C1, but does not affect estrogen-induced transactivation. In Mus musculus (Mouse), this protein is Pre-mRNA-processing factor 6 (Prpf6).